The following is a 458-amino-acid chain: Cysteine protease ATG4C (458 aa).

At methionine 1 the chain carries N-acetylmethionine. Cysteine 111 (nucleophile) is an active-site residue. Catalysis depends on residues aspartate 345 and histidine 347. Serine 451 is subject to Phosphoserine. Position 452 is a phosphothreonine (threonine 452).

Belongs to the peptidase C54 family.

Its subcellular location is the cytoplasm. The catalysed reaction is [protein]-C-terminal L-amino acid-glycyl-phosphatidylethanolamide + H2O = [protein]-C-terminal L-amino acid-glycine + a 1,2-diacyl-sn-glycero-3-phosphoethanolamine. With respect to regulation, inhibited by N-ethylmaleimide. Its function is as follows. Cysteine protease that plays a key role in autophagy by mediating both proteolytic activation and delipidation of ATG8 family proteins. The protease activity is required for proteolytic activation of ATG8 family proteins: cleaves the C-terminal amino acid of ATG8 proteins MAP1LC3 and GABARAPL2, to reveal a C-terminal glycine. Exposure of the glycine at the C-terminus is essential for ATG8 proteins conjugation to phosphatidylethanolamine (PE) and insertion to membranes, which is necessary for autophagy. In addition to the protease activity, also mediates delipidation of ATG8 family proteins. Catalyzes delipidation of PE-conjugated forms of ATG8 proteins during macroautophagy. Compared to ATG4B, the major protein for proteolytic activation of ATG8 proteins, shows weaker ability to cleave the C-terminal amino acid of ATG8 proteins, while it displays stronger delipidation activity. In contrast to other members of the family, weakly or not involved in phagophore growth during mitophagy. The protein is Cysteine protease ATG4C of Homo sapiens (Human).